The chain runs to 80 residues: FXYD domain-containing ion transport regulator 7 (80 aa).

The Extracellular segment spans residues methionine 1 to tyrosine 22. O-linked (GlcNAc) threonine glycans are attached at residues threonine 3, threonine 5, and threonine 9. A helical membrane pass occupies residues alanine 23 to leucine 45. At serine 46–valine 80 the chain is on the cytoplasmic side. The segment at aspartate 55–valine 80 is disordered. Position 73 is a phosphoserine (serine 73).

The protein belongs to the FXYD family. In terms of assembly, regulatory subunit of the sodium/potassium-transporting ATPase which is composed of a catalytic alpha subunit, a non-catalytic beta subunit and an additional regulatory subunit. The regulatory subunit, a member of the FXYD protein family, modulates the enzymatic activity in a tissue- and isoform-specific way by changing affinities of the Na+/K+-ATPase toward Na(+), K(+) or ATP. Post-translationally, O-glycosylated; required for stabilization and translocation to the plasma membrane.

The protein localises to the cell membrane. Its function is as follows. Associates with and regulates the activity of the sodium/potassium-transporting ATPase (NKA) which catalyzes the hydrolysis of ATP coupled with the exchange of Na(+) and K(+) ions across the plasma membrane. Reduces the apparent affinity for external K(+), an effect that depends on the presence of external Na(+) and voltage. Increases the apparent affinity for intracellular Na(+). This is FXYD domain-containing ion transport regulator 7 (Fxyd7) from Mus musculus (Mouse).